We begin with the raw amino-acid sequence, 235 residues long: Elongation factor Tu, chloroplastic (235 aa).

In terms of domain architecture, tr-type G spans 1–125; it reads KNMITGAAQM…EVDNYIPLPT (125 aa). Residue 47-50 participates in GTP binding; the sequence is NKAD.

Belongs to the TRAFAC class translation factor GTPase superfamily. Classic translation factor GTPase family. EF-Tu/EF-1A subfamily.

The protein resides in the plastid. It localises to the chloroplast. It carries out the reaction GTP + H2O = GDP + phosphate + H(+). GTP hydrolase that promotes the GTP-dependent binding of aminoacyl-tRNA to the A-site of ribosomes during protein biosynthesis. This is Elongation factor Tu, chloroplastic (tufA) from Bryopsis plumosa (Green alga).